The primary structure comprises 203 residues: MFEHYLSLLIKAVFVENMALAFFLGMCTFLALSKKMEAAIGLGIAVVVVLSVTVPVNNAIYNGLLREGALSWAGLPNVDLSFLGLLTYIGVIAAIVQILEMVLDKFFPALYNALGVFLPLITVNCAIMGASLFMVERDYTFGESLVYGFGAGLGWALAIIALAGIREKLKYSDVPEGLRGLGITFITVGLMSLGFMSFSGISL.

Transmembrane regions (helical) follow at residues 12–32, 36–56, 82–102, 115–135, 145–165, and 181–201; these read AVFV…FLAL, MEAA…TVPV, FLGL…LEMV, GVFL…LFMV, LVYG…LAGI, and LGIT…FSGI.

The protein belongs to the NqrDE/RnfAE family. Composed of six subunits; NqrA, NqrB, NqrC, NqrD, NqrE and NqrF.

It is found in the cell inner membrane. The enzyme catalyses a ubiquinone + n Na(+)(in) + NADH + H(+) = a ubiquinol + n Na(+)(out) + NAD(+). In terms of biological role, NQR complex catalyzes the reduction of ubiquinone-1 to ubiquinol by two successive reactions, coupled with the transport of Na(+) ions from the cytoplasm to the periplasm. NqrA to NqrE are probably involved in the second step, the conversion of ubisemiquinone to ubiquinol. This is Na(+)-translocating NADH-quinone reductase subunit E from Hahella chejuensis (strain KCTC 2396).